Consider the following 737-residue polypeptide: Polyribonucleotide nucleotidyltransferase (737 aa).

Residues aspartate 489 and aspartate 495 each coordinate Mg(2+). One can recognise a KH domain in the interval 556-615 (PKIDTIKIDVDKIKIVIGKGGETIDKIIAETGVKIDIDEEGNVSIYSSDQDAINRAKEII). Residues 625–693 (DEVYRAKVVR…EKGRIDASMK (69 aa)) enclose the S1 motif domain. The tract at residues 691–737 (SMKALLPRPPKPEHDEKGEKSERPHRPRHHKDHKPKKEFTETPKDSE) is disordered. Positions 700–714 (PKPEHDEKGEKSERP) are enriched in basic and acidic residues. Over residues 715–724 (HRPRHHKDHK) the composition is skewed to basic residues. Basic and acidic residues predominate over residues 725-737 (PKKEFTETPKDSE).

This sequence belongs to the polyribonucleotide nucleotidyltransferase family. Mg(2+) serves as cofactor.

It is found in the cytoplasm. The enzyme catalyses RNA(n+1) + phosphate = RNA(n) + a ribonucleoside 5'-diphosphate. Functionally, involved in mRNA degradation. Catalyzes the phosphorolysis of single-stranded polyribonucleotides processively in the 3'- to 5'-direction. The chain is Polyribonucleotide nucleotidyltransferase from Streptococcus pneumoniae (strain 70585).